We begin with the raw amino-acid sequence, 1025 residues long: Multidrug resistance protein MdtC (1025 aa).

A run of 12 helical transmembrane segments spans residues 3–23 (FFAL…AITL), 333–353 (EVEQ…FLFL), 360–380 (IIPA…MYLC), 387–407 (LSLM…IVVL), 431–451 (VGFT…PLLL), 463–483 (FAVT…TLTP), 528–548 (LVGV…ISIP), 853–873 (VILI…LYES), 875–895 (VHPL…LLAL), 897–917 (LFNA…IGIV), 953–973 (PIMM…LSGG), and 984–1004 (ITIV…TPVV).

This sequence belongs to the resistance-nodulation-cell division (RND) (TC 2.A.6) family. MdtC subfamily. As to quaternary structure, part of a tripartite efflux system composed of MdtA, MdtB and MdtC. MdtC forms a heteromultimer with MdtB.

The protein localises to the cell inner membrane. In terms of biological role, the MdtABC tripartite complex confers resistance against novobiocin and deoxycholate. The polypeptide is Multidrug resistance protein MdtC (Escherichia coli (strain K12 / MC4100 / BW2952)).